We begin with the raw amino-acid sequence, 458 residues long: Divalent metal cation transporter MntH (458 aa).

11 consecutive transmembrane segments (helical) span residues 38–58 (GFWK…VGYM), 76–96 (SLLS…AMAA), 119–139 (GGFL…AEII), 151–171 (MPLI…LLLM), 180–200 (AVVA…VILA), 223–243 (MLYL…LFLG), 275–295 (LTMA…LFFG), 315–335 (IVGA…LLAS), 370–390 (LMSV…EAKI), 393–413 (LLTF…IPLV), and 437–457 (FISG…LGFV).

It belongs to the NRAMP family.

The protein resides in the cell membrane. H(+)-stimulated, divalent metal cation uptake system. The sequence is that of Divalent metal cation transporter MntH from Lacticaseibacillus casei (strain BL23) (Lactobacillus casei).